The primary structure comprises 206 residues: Fibroblast growth factor 4 (206 aa).

The first 30 residues, 1–30 (MSGPGTAAVALLPAVLLALLAPWAGRGGAA), serve as a signal peptide directing secretion.

Belongs to the heparin-binding growth factors family. In terms of assembly, interacts with FGFR1, FGFR2, FGFR3 and FGFR4. Affinity between fibroblast growth factors (FGFs) and their receptors is increased by heparan sulfate glycosaminoglycans that function as coreceptors.

The protein resides in the secreted. In terms of biological role, plays an important role in the regulation of embryonic development, cell proliferation, and cell differentiation. Required for normal limb and cardiac valve development during embryogenesis. May play a role in embryonic molar tooth bud development via inducing the expression of MSX1, MSX2 and MSX1-mediated expression of SDC1 in dental mesenchyme cells. This Homo sapiens (Human) protein is Fibroblast growth factor 4.